The primary structure comprises 268 residues: UDP-2,3-diacylglucosamine hydrolase (268 aa).

D25, H27, D58, N97, and H132 together coordinate Mn(2+). 97-98 is a binding site for substrate; that stretch reads NR. 4 residues coordinate substrate: D140, S178, E191, and H222. The Mn(2+) site is built by H222 and H224.

Belongs to the LpxH family. The cofactor is Mn(2+).

The protein resides in the cell inner membrane. It catalyses the reaction UDP-2-N,3-O-bis[(3R)-3-hydroxytetradecanoyl]-alpha-D-glucosamine + H2O = 2-N,3-O-bis[(3R)-3-hydroxytetradecanoyl]-alpha-D-glucosaminyl 1-phosphate + UMP + 2 H(+). It participates in glycolipid biosynthesis; lipid IV(A) biosynthesis; lipid IV(A) from (3R)-3-hydroxytetradecanoyl-[acyl-carrier-protein] and UDP-N-acetyl-alpha-D-glucosamine: step 4/6. Functionally, hydrolyzes the pyrophosphate bond of UDP-2,3-diacylglucosamine to yield 2,3-diacylglucosamine 1-phosphate (lipid X) and UMP by catalyzing the attack of water at the alpha-P atom. Involved in the biosynthesis of lipid A, a phosphorylated glycolipid that anchors the lipopolysaccharide to the outer membrane of the cell. The protein is UDP-2,3-diacylglucosamine hydrolase of Ralstonia nicotianae (strain ATCC BAA-1114 / GMI1000) (Ralstonia solanacearum).